The primary structure comprises 263 residues: Endonuclease NucS (263 aa).

This sequence belongs to the NucS endonuclease family.

It localises to the cytoplasm. Functionally, cleaves both 3' and 5' ssDNA extremities of branched DNA structures. The protein is Endonuclease NucS of Methanocaldococcus jannaschii (strain ATCC 43067 / DSM 2661 / JAL-1 / JCM 10045 / NBRC 100440) (Methanococcus jannaschii).